We begin with the raw amino-acid sequence, 278 residues long: HTH-type transcriptional activator RhaS (278 aa).

In terms of domain architecture, HTH araC/xylS-type spans 174-272 (NQLMAWLEDH…NWSPRDIRQG (99 aa)). 2 consecutive DNA-binding regions (H-T-H motif) follow at residues 191–212 (EAVAEQFSLSLRTLHRQLKQHT) and 239–262 (VTEIAYRCGFGDSNHFSTLFRREF).

Binds DNA as a dimer.

It is found in the cytoplasm. In terms of biological role, activates expression of the rhaBAD and rhaT operons. This chain is HTH-type transcriptional activator RhaS, found in Salmonella dublin (strain CT_02021853).